We begin with the raw amino-acid sequence, 377 residues long: Mechanosensory abnormality protein 6 (377 aa).

At 1–13 (MGLQSAAAHFINR) the chain is on the cytoplasmic side. The chain crosses the membrane as a helical span at residues 14–34 (FIIWITIFMVACFLLRLLVVL). At 35–377 (DLNKRVYNHT…HCDLTHSYIT (343 aa)) the chain is on the extracellular side. Cys48 and Cys369 are joined by a disulfide. A glycan (N-linked (GlcNAc...) asparagine) is linked at Asn94.

Belongs to the paraoxonase family. Component of a non-voltage-gated amiloride-sensitive cation channel complex (also called the degenerin channel complex) composed of at least the mec-2, mec-4, mec-6 and mec-10 subunits; the complex mediates mechanotransduction in touch cells. Interacts with mec-2, mec-4 and mec-10. Post-translationally, glycosylated. Expressed in neurons including the six touch receptors, ventral cord motor neurons, HSN, PVD, PVC, IL1, and several neurons near the nerve ring, in the anal ganglion and in the male tail sensory rays, in muscles including the body wall, vulval, intestinal, anal depressor and sphincter muscles, and in the excretory canal.

The protein resides in the cell membrane. It localises to the cell projection. It is found in the axon. Subunit of an amiloride-sensitive cation channel (degenerin channel complex) permeable for sodium, potassium, lithium and N-methylglucamine, and required for mechanosensory transduction (touch sensitivity). Interacts with degenerin channel proteins and stabilizes the channel. Plays a role in mechanosensory transduction (touch sensitivity). In Caenorhabditis elegans, this protein is Mechanosensory abnormality protein 6.